A 121-amino-acid chain; its full sequence is Large ribosomal subunit protein uL18 (121 aa).

The protein belongs to the universal ribosomal protein uL18 family. As to quaternary structure, part of the 50S ribosomal subunit; part of the 5S rRNA/L5/L18/L25 subcomplex. Contacts the 5S and 23S rRNAs.

This is one of the proteins that bind and probably mediate the attachment of the 5S RNA into the large ribosomal subunit, where it forms part of the central protuberance. This is Large ribosomal subunit protein uL18 from Streptococcus equi subsp. zooepidemicus (strain MGCS10565).